The primary structure comprises 180 residues: UPF0227 protein ECA1814 (180 aa).

It belongs to the UPF0227 family.

In Pectobacterium atrosepticum (strain SCRI 1043 / ATCC BAA-672) (Erwinia carotovora subsp. atroseptica), this protein is UPF0227 protein ECA1814.